We begin with the raw amino-acid sequence, 409 residues long: ORC1-type DNA replication protein 1 (409 aa).

Residues T63–A67, Y206, and R218 each bind ATP.

The protein belongs to the CDC6/cdc18 family.

Involved in regulation of DNA replication. This Archaeoglobus fulgidus (strain ATCC 49558 / DSM 4304 / JCM 9628 / NBRC 100126 / VC-16) protein is ORC1-type DNA replication protein 1 (cdc6-1).